We begin with the raw amino-acid sequence, 267 residues long: Fibroin light chain (267 aa).

The signal sequence occupies residues 1 to 16 (MLPFVLVLLVATSALA). Position 19 is an N-acetylserine; in short form (S19). C103 and C162 are disulfide-bonded.

Silk fibroin elementary unit consists in a disulfide-linked heavy and light chain and a p25 glycoprotein in molar ratios of 6:6:1. This results in a complex of approximately 2.3 MDa. In terms of processing, partially N-terminally processed to yield a short form which lacks the first two residues of the long form. The interchain disulfide bridge is essential for the intracellular transport and secretion of fibroin. In terms of tissue distribution, produced exclusively in the posterior (PSG) section of silk glands, which are essentially modified salivary glands.

It is found in the secreted. Functionally, it is likely that the major role of L-chain is to prevent the retention of H-chain in ER by forming the disulfide linkage. This Galleria mellonella (Greater wax moth) protein is Fibroin light chain (FIBL).